We begin with the raw amino-acid sequence, 437 residues long: Protein disulfide-isomerase tmx3a (437 aa).

An N-terminal signal peptide occupies residues 1-21 (MANMRNIILTALLSAIALVSG). Positions 22 to 126 (YVEGLDDKFT…IIEFTNRVSG (105 aa)) constitute a Thioredoxin domain. Residues 22-368 (YVEGLDDKFT…KNTVMSMVET (347 aa)) lie on the Extracellular side of the membrane. Residues cysteine 48 and cysteine 51 each act as nucleophile in the active site. A disulfide bridge links cysteine 48 with cysteine 51. Asparagine 308 is a glycosylation site (N-linked (GlcNAc...) asparagine). Residues 369–389 (APVFSCFVLGLPVGVVVLVIY) traverse the membrane as a helical segment. Residues 390–437 (ATCTAVPADDEKPEEEATASPALDTHGKKAIESQPESTEKTSEAKKED) are Cytoplasmic-facing. The interval 398–437 (DDEKPEEEATASPALDTHGKKAIESQPESTEKTSEAKKED) is disordered. Residues 414-437 (THGKKAIESQPESTEKTSEAKKED) are compositionally biased toward basic and acidic residues. Positions 434–437 (KKED) match the Di-lysine motif motif.

It is found in the endoplasmic reticulum membrane. It catalyses the reaction Catalyzes the rearrangement of -S-S- bonds in proteins.. Its function is as follows. Probable disulfide isomerase, which participates in the folding of proteins containing disulfide bonds. May act as a dithiol oxidase. Acts as a regulator of endoplasmic reticulum-mitochondria contact sites via its ability to regulate redox signals. In Danio rerio (Zebrafish), this protein is Protein disulfide-isomerase tmx3a (tmx3a).